The following is a 427-amino-acid chain: Enolase (427 aa).

(2R)-2-phosphoglycerate is bound at residue glutamine 163. Glutamate 205 serves as the catalytic Proton donor. Mg(2+) contacts are provided by aspartate 242, glutamate 285, and aspartate 312. The (2R)-2-phosphoglycerate site is built by lysine 337, arginine 366, serine 367, and lysine 388. Lysine 337 functions as the Proton acceptor in the catalytic mechanism.

Belongs to the enolase family. Mg(2+) is required as a cofactor.

Its subcellular location is the cytoplasm. The protein localises to the secreted. It localises to the cell surface. The enzyme catalyses (2R)-2-phosphoglycerate = phosphoenolpyruvate + H2O. It participates in carbohydrate degradation; glycolysis; pyruvate from D-glyceraldehyde 3-phosphate: step 4/5. Functionally, catalyzes the reversible conversion of 2-phosphoglycerate (2-PG) into phosphoenolpyruvate (PEP). It is essential for the degradation of carbohydrates via glycolysis. In Bradyrhizobium diazoefficiens (strain JCM 10833 / BCRC 13528 / IAM 13628 / NBRC 14792 / USDA 110), this protein is Enolase.